Here is a 98-residue protein sequence, read N- to C-terminus: uncharacterized protein (98 aa).

The N-terminal stretch at 1 to 23 (MKKMQSIVLALSLVLVAPMAAQA) is a signal peptide. Positions 68-98 (WHLHGPPPPPRHHKKAPHDHHGGHGPGKHHR) are disordered. Basic residues predominate over residues 77 to 98 (PRHHKKAPHDHHGGHGPGKHHR).

It to E.coli YpeC.

This is an uncharacterized protein from Escherichia coli (strain K12).